The following is a 145-amino-acid chain: Large ribosomal subunit protein bL9 (145 aa).

This sequence belongs to the bacterial ribosomal protein bL9 family.

Its function is as follows. Binds to the 23S rRNA. This Mesomycoplasma hyopneumoniae (strain J / ATCC 25934 / NCTC 10110) (Mycoplasma hyopneumoniae) protein is Large ribosomal subunit protein bL9.